Consider the following 412-residue polypeptide: MATSIPTNNPLHTETSSQKNYGFALTSLTLLFFMWGFITCLNDILIPHLKNVFQLNYTQSMLIQFCFFGAYFIVSLPAGQLVKRISYKRGIVVGLIVAAIGCALFIPAASYRVYALFLGALFVLASGVTILQVAANPYVTILGKPETAASRLTLTQAFNSLGTTVAPVFGAVLILSAATDATVNAEADAVRFPYLLLALAFTVLAIIFAILKPPDVQEDEPALSDKKEGSAWQYRHLVLGAIGIFVYVGAEVSVGSFLVNFLSDPTVAGLSETDAAHHVAYFWGGAMVGRFIGSAAMRYIDDGKALAFNAFVAIILLFITVATTGHIAMWSVLAIGLFNSIMFPTIFSLALHGLGSHTSQGSGILCLAIVGGAIVPLIQGALADAIGIHLAFLMPIICYAYIAFYGLIGSKS.

Transmembrane regions (helical) follow at residues Tyr21–Leu41, Leu62–Val82, Gly90–Ser110, Val113–Val133, Phe158–Ala178, Phe192–Lys212, Leu239–Val259, Ala310–Trp330, Ser331–Leu351, Gly363–Ala383, and Ile388–Ile408.

It belongs to the major facilitator superfamily. FHS transporter (TC 2.A.1.7) family.

Its subcellular location is the cell inner membrane. Intake of glucose and galactose. In Brucella abortus (strain 2308), this protein is Glucose/galactose transporter (gluP).